Reading from the N-terminus, the 479-residue chain is UDP-N-acetylmuramate--L-alanine ligase (479 aa).

124–130 (GSHGKTT) contributes to the ATP binding site.

This sequence belongs to the MurCDEF family.

The protein localises to the cytoplasm. It carries out the reaction UDP-N-acetyl-alpha-D-muramate + L-alanine + ATP = UDP-N-acetyl-alpha-D-muramoyl-L-alanine + ADP + phosphate + H(+). The protein operates within cell wall biogenesis; peptidoglycan biosynthesis. Its function is as follows. Cell wall formation. This is UDP-N-acetylmuramate--L-alanine ligase from Synechococcus sp. (strain RCC307).